The following is an 841-amino-acid chain: Alpha-glucuronidase A (841 aa).

The first 20 residues, 1–20, serve as a signal peptide directing secretion; that stretch reads MRGSNLFQLTLALLLSLVAA. Residues N51, N76, N149, N222, N279, N310, N343, N450, N465, N527, N576, N682, N723, and N732 are each glycosylated (N-linked (GlcNAc...) asparagine).

It belongs to the glycosyl hydrolase 67 family.

The protein localises to the secreted. The enzyme catalyses an alpha-D-glucuronoside + H2O = D-glucuronate + an alcohol. Functionally, alpha-glucuronidase involved in the hydrolysis of xylan, a major structural heterogeneous polysaccharide found in plant biomass representing the second most abundant polysaccharide in the biosphere, after cellulose. Releases 4-O-methylglucuronic acid from xylan. The chain is Alpha-glucuronidase A (aguA) from Aspergillus tubingensis.